The primary structure comprises 619 residues: Xyloglucan galactosyltransferase MUR3 (619 aa).

The interval 1-26 (MFPRVSMRRRSAEVSPTEPMEKGNGK) is disordered. Over 1 to 33 (MFPRVSMRRRSAEVSPTEPMEKGNGKNQTNRIC) the chain is Cytoplasmic. The helical; Signal-anchor for type II membrane protein transmembrane segment at 34–54 (LLVALSLFFWALLLYFHFVVL) threads the bilayer. Residues 55–619 (GTSNIDKQLQ…WKSEQRDKTQ (565 aa)) are Lumenal-facing. 7 N-linked (GlcNAc...) asparagine glycosylation sites follow: N116, N146, N231, N257, N319, N465, and N482. Residues 576–619 (HVWDPFFSKPKPGEDGSSDGNGGTTISADAAKNSWKSEQRDKTQ) form a disordered region. Positions 610–619 (WKSEQRDKTQ) are enriched in basic and acidic residues.

The protein belongs to the glycosyltransferase 47 family. As to quaternary structure, interacts with CSLC4 and FUT1. In terms of tissue distribution, ubiquitous.

The protein resides in the golgi apparatus. Its subcellular location is the golgi stack membrane. The protein localises to the golgi apparatus membrane. Functionally, involved in the attachment of the Gal residue on the third xylosyl unit within the XXXG core structure of xyloglucan, the principal glycan that interlaces the cellulose microfibrils in plant cell wall. Associates with other xyloglucan-synthesizing enzymes to form multiprotein complexes for xyloglucan synthesis in the Golgi. Interacts with actin and is required for the proper endomembrane organization and for the cell elongation. Not involved in the trafficking from the endoplasmic reticulum to the vacuoles. Involved in salt stress tolerance. Participates in the control of the expression of genes encoding for proteins involved in reactive oxygen species (ROS) detoxification under salt stress. May contribute to the maintenance of the proper organization of actin microfilaments during salt stress-induced ROS production. The protein is Xyloglucan galactosyltransferase MUR3 of Arabidopsis thaliana (Mouse-ear cress).